The primary structure comprises 144 residues: INO80 complex subunit 5 (144 aa).

The tract at residues 1–58 (MAAQKKQGERVLPARSTRKRRQLPDMLYYDERTDSYVTPQERSLSEANAQTRPAPNTI) is disordered. Polar residues predominate over residues 35 to 58 (SYVTPQERSLSEANAQTRPAPNTI).

In terms of assembly, component of the INO80 chromatin remodeling complex.

The protein resides in the nucleus. Functionally, component of the INO80 complex which remodels chromatin by shifting nucleosomes and is involved in DNA repair. This chain is INO80 complex subunit 5 (iec5), found in Schizosaccharomyces pombe (strain 972 / ATCC 24843) (Fission yeast).